We begin with the raw amino-acid sequence, 316 residues long: GPI-specific phospholipase A2-like PGAP3 (316 aa).

An N-terminal signal peptide occupies residues 1-18; that stretch reads MAPFLVLFLAGVVAASRG. Residues 19–93 are Lumenal-facing; the sequence is DREPVYRDCV…QFHGKWPFSR (75 aa). An N-linked (GlcNAc...) asparagine glycan is attached at N35. The chain crosses the membrane as a helical span at residues 94 to 114; the sequence is FLFFQEPASALASFLNGVASL. At 115 to 132 the chain is on the cytoplasmic side; that stretch reads LMLLRYRSSVPSSCQMYR. Residues 133–153 traverse the membrane as a helical segment; the sequence is TCLAFSMVSVNAWFWSTIFHT. Residues 154–163 lie on the Lumenal side of the membrane; the sequence is RDTALTEKMD. Residues 164–180 form a helical membrane-spanning segment; the sequence is YFCASSVILHSIYLCCM. Topologically, residues 181–182 are cytoplasmic; sequence RT. A helical membrane pass occupies residues 183 to 203; it reads FGLQYPSIANGFGAFLVLLFA. Residues 204–218 are Lumenal-facing; sequence CHVSYLTLGRFDYSY. Residues 219–239 form a helical membrane-spanning segment; that stretch reads NMAANTGFGVLNLMWWLAWCF. Residues 240–251 are Cytoplasmic-facing; that stretch reads RRRFHQPYLWKC. The chain crosses the membrane as a helical span at residues 252–272; the sequence is VLVVISLQSLALLELLDFPPV. Residue M273 is a topological domain, lumenal. The helical transmembrane segment at 274-293 threads the bilayer; that stretch reads WILDAHALWHFSTVPLHFLF. Residues 294–316 are Cytoplasmic-facing; it reads YSFLKDDSLYLLKINHDDIPKLD.

It belongs to the PGAP3 family.

Its subcellular location is the golgi apparatus membrane. Its function is as follows. Involved in the fatty acid remodeling steps of GPI-anchor maturation where the unsaturated acyl chain at sn-2 of inositol phosphate is replaced by a saturated stearoyl chain. May catalyze the first step of the fatty acid remodeling, by removing the unsaturated acyl chain at sn-2 of inositol phosphate, generating a lyso-GPI intermediate. The fatty acid remodeling steps is critical for the integration of GPI-APs into lipid rafts. The protein is GPI-specific phospholipase A2-like PGAP3 of Xenopus tropicalis (Western clawed frog).